The following is a 307-amino-acid chain: RHOMBOID-like protein 6, mitochondrial (307 aa).

A mitochondrion-targeting transit peptide spans 1–62; the sequence is MRSRDMERGR…DCVAKLLRRF (62 aa). Transmembrane regions (helical) follow at residues 105 to 125, 136 to 156, 159 to 179, 191 to 211, 214 to 234, and 262 to 282; these read WLHA…IFGI, IGLI…LFLQ, ISVG…SELL, ALLS…LPWV, FAHI…LMQP, and LFFV…VMLF. The Nucleophile role is filled by Ser164. His216 acts as the Charge relay system in catalysis.

It belongs to the peptidase S54 family.

It is found in the mitochondrion membrane. The catalysed reaction is Cleaves type-1 transmembrane domains using a catalytic dyad composed of serine and histidine that are contributed by different transmembrane domains.. Functionally, probable rhomboid-type serine protease that catalyzes intramembrane proteolysis. Might be involved in response to abiotic stimuli. The sequence is that of RHOMBOID-like protein 6, mitochondrial from Arabidopsis thaliana (Mouse-ear cress).